Reading from the N-terminus, the 203-residue chain is Small ribosomal subunit protein uS4c (203 aa).

The S4 RNA-binding domain maps to methionine 91–isoleucine 154.

It belongs to the universal ribosomal protein uS4 family. As to quaternary structure, part of the 30S ribosomal subunit. Contacts protein S5. The interaction surface between S4 and S5 is involved in control of translational fidelity.

The protein localises to the plastid. It is found in the chloroplast. Functionally, one of the primary rRNA binding proteins, it binds directly to 16S rRNA where it nucleates assembly of the body of the 30S subunit. In terms of biological role, with S5 and S12 plays an important role in translational accuracy. The sequence is that of Small ribosomal subunit protein uS4c (rps4) from Lopidium struthiopteris (Moss).